A 484-amino-acid chain; its full sequence is Aspartyl/glutamyl-tRNA(Asn/Gln) amidotransferase subunit B (484 aa).

This sequence belongs to the GatB/GatE family. GatB subfamily. In terms of assembly, heterotrimer of A, B and C subunits.

It carries out the reaction L-glutamyl-tRNA(Gln) + L-glutamine + ATP + H2O = L-glutaminyl-tRNA(Gln) + L-glutamate + ADP + phosphate + H(+). It catalyses the reaction L-aspartyl-tRNA(Asn) + L-glutamine + ATP + H2O = L-asparaginyl-tRNA(Asn) + L-glutamate + ADP + phosphate + 2 H(+). Functionally, allows the formation of correctly charged Asn-tRNA(Asn) or Gln-tRNA(Gln) through the transamidation of misacylated Asp-tRNA(Asn) or Glu-tRNA(Gln) in organisms which lack either or both of asparaginyl-tRNA or glutaminyl-tRNA synthetases. The reaction takes place in the presence of glutamine and ATP through an activated phospho-Asp-tRNA(Asn) or phospho-Glu-tRNA(Gln). In Anaeromyxobacter dehalogenans (strain 2CP-C), this protein is Aspartyl/glutamyl-tRNA(Asn/Gln) amidotransferase subunit B.